The chain runs to 215 residues: 3-demethoxyubiquinol 3-hydroxylase (215 aa).

Glutamate 64, glutamate 94, histidine 97, glutamate 146, glutamate 178, and histidine 181 together coordinate Fe cation.

This sequence belongs to the COQ7 family. Fe cation serves as cofactor.

Its subcellular location is the cell membrane. The catalysed reaction is a 5-methoxy-2-methyl-3-(all-trans-polyprenyl)benzene-1,4-diol + AH2 + O2 = a 3-demethylubiquinol + A + H2O. It participates in cofactor biosynthesis; ubiquinone biosynthesis. In terms of biological role, catalyzes the hydroxylation of 2-nonaprenyl-3-methyl-6-methoxy-1,4-benzoquinol during ubiquinone biosynthesis. The polypeptide is 3-demethoxyubiquinol 3-hydroxylase (Stutzerimonas stutzeri (strain A1501) (Pseudomonas stutzeri)).